A 235-amino-acid chain; its full sequence is Large ribosomal subunit protein uL1 (235 aa).

It belongs to the universal ribosomal protein uL1 family. As to quaternary structure, part of the 50S ribosomal subunit.

Functionally, binds directly to 23S rRNA. The L1 stalk is quite mobile in the ribosome, and is involved in E site tRNA release. In terms of biological role, protein L1 is also a translational repressor protein, it controls the translation of the L11 operon by binding to its mRNA. The chain is Large ribosomal subunit protein uL1 from Corynebacterium diphtheriae (strain ATCC 700971 / NCTC 13129 / Biotype gravis).